A 474-amino-acid polypeptide reads, in one-letter code: tRNA-2-methylthio-N(6)-dimethylallyladenosine synthase (474 aa).

Positions 3 to 120 (QKLHIKTWGC…LPEMINQIRG (118 aa)) constitute an MTTase N-terminal domain. Residues Cys-12, Cys-49, Cys-83, Cys-157, Cys-161, and Cys-164 each contribute to the [4Fe-4S] cluster site. Residues 143-375 (RAEGPTAFVS…QQRINNQAAQ (233 aa)) form the Radical SAM core domain. Residues 378-441 (RAMLGTEQRV…TNSLRGEVVR (64 aa)) enclose the TRAM domain.

The protein belongs to the methylthiotransferase family. MiaB subfamily. As to quaternary structure, monomer. [4Fe-4S] cluster is required as a cofactor.

It is found in the cytoplasm. It catalyses the reaction N(6)-dimethylallyladenosine(37) in tRNA + (sulfur carrier)-SH + AH2 + 2 S-adenosyl-L-methionine = 2-methylsulfanyl-N(6)-dimethylallyladenosine(37) in tRNA + (sulfur carrier)-H + 5'-deoxyadenosine + L-methionine + A + S-adenosyl-L-homocysteine + 2 H(+). Functionally, catalyzes the methylthiolation of N6-(dimethylallyl)adenosine (i(6)A), leading to the formation of 2-methylthio-N6-(dimethylallyl)adenosine (ms(2)i(6)A) at position 37 in tRNAs that read codons beginning with uridine. This Histophilus somni (strain 129Pt) (Haemophilus somnus) protein is tRNA-2-methylthio-N(6)-dimethylallyladenosine synthase.